A 190-amino-acid polypeptide reads, in one-letter code: Elongation factor P 2 (190 aa).

It belongs to the elongation factor P family.

The protein resides in the cytoplasm. Its pathway is protein biosynthesis; polypeptide chain elongation. Involved in peptide bond synthesis. Stimulates efficient translation and peptide-bond synthesis on native or reconstituted 70S ribosomes in vitro. Probably functions indirectly by altering the affinity of the ribosome for aminoacyl-tRNA, thus increasing their reactivity as acceptors for peptidyl transferase. The polypeptide is Elongation factor P 2 (efp2) (Protochlamydia amoebophila (strain UWE25)).